The primary structure comprises 132 residues: UPF0299 membrane protein Ent638_2744 (132 aa).

Helical transmembrane passes span 8–28 (VWQY…GIFI), 31–51 (LLPI…LLLA), 63–83 (GCFV…VGVM), and 93–113 (FGPI…VVSW).

This sequence belongs to the UPF0299 family.

The protein localises to the cell inner membrane. The protein is UPF0299 membrane protein Ent638_2744 of Enterobacter sp. (strain 638).